The chain runs to 587 residues: MKRSMYAGRVREEHIGQEITLKGWVGRRRDLGGLIFIDLRDREGIMQLVINPEKVSAEVMATAESLRSEFVIEVTGQVAAREQANDKLPTGAVELNVTALIVLNTAKTTPFEIKDGIEANDDTRLRYRYLDLRRPEMLENLKLRAKVTHSIRNYLDELEFIDVETPFLSKSTPEGARDYLVPSRVNKGHFYALPQSPQITKQLLMNAGFDRYYQIVKCFRDEDLRGDRQPEFTQVDLETSFLTEQEIQDITEGLIARVMKETKGIEVTLPFPRVKYDDAMALYGSDKPDTRFDMLLQDLTEVVKGVDFKVFSEAPAVKAIVVKGAADNYSRKDIDKMTEVAKQYGAKGLAWVKVVDGELNGPVAKFLTGIQEELTTALALEDKDLVLFVADTLEVANATLGALRGRIAKELGLIDNDKFNFLWVVDWPMFEWSEEEGRYMSAHHPFTLPQEETAHELEGDLAKVRAIAYDIVLNGYELGGGSLRINQKDLQERMFKALGFSAEEANDQFGFLLEAMDYGFPPHGGLAIGLDRFVMLLAGEENIREVIAFPKNNKATDPMTQAPSTVALKQLEELSLQVEEDETSKTN.

Glu174 provides a ligand contact to L-aspartate. The aspartate stretch occupies residues 198 to 201; the sequence is QITK. L-aspartate is bound at residue Arg220. ATP is bound by residues 220 to 222 and Gln229; that span reads RDE. His443 contacts L-aspartate. Glu477 is a binding site for ATP. Residue Arg484 coordinates L-aspartate. 529–532 serves as a coordination point for ATP; the sequence is GLDR.

The protein belongs to the class-II aminoacyl-tRNA synthetase family. Type 1 subfamily. Homodimer.

Its subcellular location is the cytoplasm. The enzyme catalyses tRNA(Asp) + L-aspartate + ATP = L-aspartyl-tRNA(Asp) + AMP + diphosphate. Its function is as follows. Catalyzes the attachment of L-aspartate to tRNA(Asp) in a two-step reaction: L-aspartate is first activated by ATP to form Asp-AMP and then transferred to the acceptor end of tRNA(Asp). This Streptococcus pneumoniae (strain Taiwan19F-14) protein is Aspartate--tRNA ligase.